The chain runs to 192 residues: MAKRVFFSFHYQDVIDFRVNVVRNHWVTKLNQSAAGVFDASLWEDAKKTSDIALKRLINGGLNNTSVTCVLIGSQTFNRRWVRYEIMKSIEKGNKIIGIHINAFKDKYGNIKSKGPNPFDYLGYQYSSDGKQLHLYEWTGGKWEEYKDLAPYRVNQIAPESLRGKFYSLSSVYRVYDWVADDGYNKFSSWVN.

It belongs to the Thoeris B TIR-like family. Monomer; not seen to interact with ThsA.

The protein localises to the cytoplasm. Its activity is regulated as follows. Activated upon phage infection. TIR-like domain-containing component of the Thoeris antiviral defense system, composed of ThsA and ThsB. Expression of ThsA and ThsB in B.subtilis (strain BEST7003) confers resistance to phages SBSphiC, SBSphiJ and SPO1. Phage infection activates this protein so that 30 to 45 minutes post-infection with phage SPO1 it generates a signal molecule that in turn activates the NAD(+) hydrolase activity of ThsA. The signal is similar to cyclic ADP-D-ribose, but how it differs is unknown. In vitro purified (but unactivated) ThsB has no NAD(+) hydrolyzing activity, no activity on AMP, CMP, GMP or UMP, does not alter the activity of ThsA, does not bind DNA. Hydrolyzes NAD(+) to make a cyclic ADP-D-ribose (cADPR) signaling molecule; might make 3'cADPR. This Bacillus cereus (strain MSX-D12) protein is Putative cyclic ADP-D-ribose synthase ThsB1.